The primary structure comprises 99 residues: NADH-quinone oxidoreductase subunit K (99 aa).

A run of 3 helical transmembrane segments spans residues 3-23, 28-48, and 59-79; these read PINY…GVLL, IVMF…FVTF, and MIAF…LAII.

Belongs to the complex I subunit 4L family. In terms of assembly, NDH-1 is composed of 14 different subunits. Subunits NuoA, H, J, K, L, M, N constitute the membrane sector of the complex.

The protein localises to the cell membrane. It catalyses the reaction a quinone + NADH + 5 H(+)(in) = a quinol + NAD(+) + 4 H(+)(out). In terms of biological role, NDH-1 shuttles electrons from NADH, via FMN and iron-sulfur (Fe-S) centers, to quinones in the respiratory chain. The immediate electron acceptor for the enzyme in this species is believed to be a menaquinone. Couples the redox reaction to proton translocation (for every two electrons transferred, four hydrogen ions are translocated across the cytoplasmic membrane), and thus conserves the redox energy in a proton gradient. This is NADH-quinone oxidoreductase subunit K from Mycobacterium avium (strain 104).